Consider the following 238-residue polypeptide: MSEVTTAEFNEEGKYLRKIRSFVLREGRLTKGQAQAIESQWPTMGLDYSPTPLVLSDVFGREADTVLEIGFGMGASLVQMAKDAPAQNFIGIEVHKPGVGSCLSDAAIAGVTNLRVYHHDAMEVLEHAIADGSLARVQLFFPDPWHKKRHHKRRIVQAEFAELIRRKLKIGGVFHIATDWEEYSEHMLEVMQAAPGYKNQSSDGTVVPRPDHRPLTKFEARGHRLGHGVWDLMFERIA.

4 residues coordinate S-adenosyl-L-methionine: glutamate 68, glutamate 93, aspartate 120, and aspartate 143. Residue aspartate 143 is part of the active site. Substrate is bound by residues lysine 147, aspartate 179, and 216 to 219; that span reads TKFE.

It belongs to the class I-like SAM-binding methyltransferase superfamily. TrmB family.

It carries out the reaction guanosine(46) in tRNA + S-adenosyl-L-methionine = N(7)-methylguanosine(46) in tRNA + S-adenosyl-L-homocysteine. It functions in the pathway tRNA modification; N(7)-methylguanine-tRNA biosynthesis. Catalyzes the formation of N(7)-methylguanine at position 46 (m7G46) in tRNA. This is tRNA (guanine-N(7)-)-methyltransferase from Shewanella baltica (strain OS195).